We begin with the raw amino-acid sequence, 207 residues long: Guanylate kinase (207 aa).

In terms of domain architecture, Guanylate kinase-like spans 6–185 (GLLIVLSGPS…AKNRIQSIVE (180 aa)). An ATP-binding site is contributed by 13-20 (GPSGVGKG).

The protein belongs to the guanylate kinase family.

It localises to the cytoplasm. The enzyme catalyses GMP + ATP = GDP + ADP. In terms of biological role, essential for recycling GMP and indirectly, cGMP. The protein is Guanylate kinase of Staphylococcus epidermidis (strain ATCC 12228 / FDA PCI 1200).